Here is a 95-residue protein sequence, read N- to C-terminus: Aspartyl/glutamyl-tRNA(Asn/Gln) amidotransferase subunit C (95 aa).

It belongs to the GatC family. As to quaternary structure, heterotrimer of A, B and C subunits.

The enzyme catalyses L-glutamyl-tRNA(Gln) + L-glutamine + ATP + H2O = L-glutaminyl-tRNA(Gln) + L-glutamate + ADP + phosphate + H(+). The catalysed reaction is L-aspartyl-tRNA(Asn) + L-glutamine + ATP + H2O = L-asparaginyl-tRNA(Asn) + L-glutamate + ADP + phosphate + 2 H(+). In terms of biological role, allows the formation of correctly charged Asn-tRNA(Asn) or Gln-tRNA(Gln) through the transamidation of misacylated Asp-tRNA(Asn) or Glu-tRNA(Gln) in organisms which lack either or both of asparaginyl-tRNA or glutaminyl-tRNA synthetases. The reaction takes place in the presence of glutamine and ATP through an activated phospho-Asp-tRNA(Asn) or phospho-Glu-tRNA(Gln). The chain is Aspartyl/glutamyl-tRNA(Asn/Gln) amidotransferase subunit C from Ruegeria pomeroyi (strain ATCC 700808 / DSM 15171 / DSS-3) (Silicibacter pomeroyi).